The primary structure comprises 201 residues: 3-isopropylmalate dehydratase small subunit (201 aa).

It belongs to the LeuD family. LeuD type 1 subfamily. Heterodimer of LeuC and LeuD.

The enzyme catalyses (2R,3S)-3-isopropylmalate = (2S)-2-isopropylmalate. Its pathway is amino-acid biosynthesis; L-leucine biosynthesis; L-leucine from 3-methyl-2-oxobutanoate: step 2/4. In terms of biological role, catalyzes the isomerization between 2-isopropylmalate and 3-isopropylmalate, via the formation of 2-isopropylmaleate. The protein is 3-isopropylmalate dehydratase small subunit of Cereibacter sphaeroides (strain ATCC 17029 / ATH 2.4.9) (Rhodobacter sphaeroides).